Reading from the N-terminus, the 414-residue chain is MALISLAIDYKKSPIEVRSEFALSGLDVSMLYRSILAIDNVVHAVILSTCNRTEVYLEISDLRVVDDILVWWQGYVRNPNYKIKDYFKLRQGTEVIMHLMKLACGLESMVLGEPQILGQVKDSYTLSKKNHAIGKELDRVFQKVFATAKRVRSETRIGYCPVSVAFSAITLAKRQLDNICSKNVLIIGAGQTGELLFRHVTALAPKQIMLANRTIEKAQKITSAFRNASAHYLSELPQLIKKADIIIAAVNVSEYIVTCKDVGDKPRVFIDISIPQALDPKLGELEQNVYYCVDDINAVIEDNKDKRKYESSKAQKIIVKSLEEYLEKEKAIISNSAIKELFQKADGLVDLSLEKSLAKIRNGKDAEEIIKRFAYEIKKKVLHYPVVGMKEASKQGRSDCLVCMKRMFGLNVEK.

Residues 49–52 (TCNR), serine 108, 113–115 (EPQ), and glutamine 119 contribute to the substrate site. Cysteine 50 (nucleophile) is an active-site residue. Residue 188–193 (GAGQTG) participates in NADP(+) binding.

Belongs to the glutamyl-tRNA reductase family. In terms of assembly, homodimer.

The catalysed reaction is (S)-4-amino-5-oxopentanoate + tRNA(Glu) + NADP(+) = L-glutamyl-tRNA(Glu) + NADPH + H(+). It participates in porphyrin-containing compound metabolism; protoporphyrin-IX biosynthesis; 5-aminolevulinate from L-glutamyl-tRNA(Glu): step 1/2. Functionally, catalyzes the NADPH-dependent reduction of glutamyl-tRNA(Glu) to glutamate 1-semialdehyde (GSA). In Francisella tularensis subsp. novicida (strain U112), this protein is Glutamyl-tRNA reductase.